We begin with the raw amino-acid sequence, 250 residues long: MADS-box transcription factor 47 (250 aa).

Residues 1-10 (MAGGGGGGGR) are compositionally biased toward gly residues. Disordered stretches follow at residues 1 to 20 (MAGG…AATG) and 196 to 250 (SRME…FSSK). The span at 11-20 (GEGEGRAATG) shows a compositional bias: basic and acidic residues. An MADS-box domain is found at 20–80 (GKRERIAIRR…GKLFQFASTS (61 aa)). The K-box domain occupies 106–198 (QGEDSSTCAR…QLQVSRMSRM (93 aa)). Over residues 214–224 (GQSSESVTNAS) the composition is skewed to polar residues.

As to quaternary structure, may interact with MADS18. As to expression, expressed in roots, shoots and developing panicles. Expressed in mature stems and leaves, flowering panicles, developing seeds, and mature seeds.

It is found in the nucleus. Functionally, transcription factor that modulates expressions of multiple genes involved in cell signaling and gene transcription. Plays a negative regulatory role in brassinosteroid signaling. This chain is MADS-box transcription factor 47, found in Oryza sativa subsp. japonica (Rice).